Consider the following 790-residue polypeptide: Phenylalanine--tRNA ligase beta subunit (790 aa).

The region spanning Ala39–Arg147 is the tRNA-binding domain. The 77-residue stretch at Pro400 to Val476 folds into the B5 domain. The Mg(2+) site is built by Asp454, Asp460, Glu463, and Glu464. The FDX-ACB domain maps to Ser696–Arg789.

The protein belongs to the phenylalanyl-tRNA synthetase beta subunit family. Type 1 subfamily. As to quaternary structure, tetramer of two alpha and two beta subunits. Mg(2+) is required as a cofactor.

The protein localises to the cytoplasm. The enzyme catalyses tRNA(Phe) + L-phenylalanine + ATP = L-phenylalanyl-tRNA(Phe) + AMP + diphosphate + H(+). This Hahella chejuensis (strain KCTC 2396) protein is Phenylalanine--tRNA ligase beta subunit.